A 541-amino-acid chain; its full sequence is Propionyl-CoA carboxylase beta chain, mitochondrial (541 aa).

A mitochondrion-targeting transit peptide spans 1 to 28 (MAAAIRIRAVAAGARLSVLNCGLGITTR). In terms of domain architecture, CoA carboxyltransferase N-terminal spans 34–292 (PVSVKERIDN…SSQDPAPIRE (259 aa)). Residues 34–535 (PVSVKERIDN…SKKVHRPWRK (502 aa)) form a carboxyltransferase region. Ser-73 is modified (phosphoserine). Lys-101 is modified (N6-acetyllysine; alternate). N6-succinyllysine; alternate is present on Lys-101. The residue at position 250 (Lys-250) is an N6-succinyllysine. The 240-residue stretch at 296–535 (PSDRLVPELD…SKKVHRPWRK (240 aa)) folds into the CoA carboxyltransferase C-terminal domain. Residues 327 to 360 (DEREFFEIMPSYAKNIVVGFARMNGRTVGIVGNQ) are acyl-CoA binding. N6-acetyllysine; alternate is present on residues Lys-476 and Lys-491. N6-succinyllysine; alternate is present on residues Lys-476 and Lys-491.

This sequence belongs to the AccD/PCCB family. In terms of assembly, the holoenzyme is a dodecamer composed of 6 PCCA/alpha subunits and 6 PCCB/beta subunits. In terms of tissue distribution, broadly expressed. Most abundantly expressed in the kidney, liver, small intestine and stomach.

The protein resides in the mitochondrion matrix. The catalysed reaction is propanoyl-CoA + hydrogencarbonate + ATP = (S)-methylmalonyl-CoA + ADP + phosphate + H(+). It carries out the reaction butanoyl-CoA + hydrogencarbonate + ATP = (2S)-ethylmalonyl-CoA + ADP + phosphate + H(+). It functions in the pathway metabolic intermediate metabolism; propanoyl-CoA degradation; succinyl-CoA from propanoyl-CoA: step 1/3. In terms of biological role, this is one of the 2 subunits of the biotin-dependent propionyl-CoA carboxylase (PCC), a mitochondrial enzyme involved in the catabolism of odd chain fatty acids, branched-chain amino acids isoleucine, threonine, methionine, and valine and other metabolites. Propionyl-CoA carboxylase catalyzes the carboxylation of propionyl-CoA/propanoyl-CoA to D-methylmalonyl-CoA/(S)-methylmalonyl-CoA. Within the holoenzyme, the alpha subunit catalyzes the ATP-dependent carboxylation of the biotin carried by the biotin carboxyl carrier (BCC) domain, while the beta subunit then transfers the carboxyl group from carboxylated biotin to propionyl-CoA. Propionyl-CoA carboxylase also significantly acts on butyryl-CoA/butanoyl-CoA, which is converted to ethylmalonyl-CoA/(2S)-ethylmalonyl-CoA. Other alternative minor substrates include (2E)-butenoyl-CoA/crotonoyl-CoA. This Mus musculus (Mouse) protein is Propionyl-CoA carboxylase beta chain, mitochondrial.